The chain runs to 118 residues: Large ribosomal subunit protein bL19 (118 aa).

Belongs to the bacterial ribosomal protein bL19 family.

This protein is located at the 30S-50S ribosomal subunit interface and may play a role in the structure and function of the aminoacyl-tRNA binding site. The sequence is that of Large ribosomal subunit protein bL19 from Salinispora tropica (strain ATCC BAA-916 / DSM 44818 / JCM 13857 / NBRC 105044 / CNB-440).